Consider the following 48-residue polypeptide: Acidic phospholipase A2 (48 aa).

Ca(2+) is bound by residues tyrosine 27, glycine 29, and glycine 31. A disulfide bond links cysteine 28 and cysteine 44. Histidine 47 is a catalytic residue. A Ca(2+)-binding site is contributed by aspartate 48.

The protein belongs to the phospholipase A2 family. Group II subfamily. D49 sub-subfamily. As to quaternary structure, monomer. Ca(2+) is required as a cofactor. In terms of tissue distribution, expressed by the venom gland.

Its subcellular location is the secreted. It carries out the reaction a 1,2-diacyl-sn-glycero-3-phosphocholine + H2O = a 1-acyl-sn-glycero-3-phosphocholine + a fatty acid + H(+). Inhibited by EDTA. Inhibited by Ba(2+), Cu(+), Fe(2+) and Zn(2+) ions and, to a lesser extent, by Mn(2+) and Mg(2+) ions. Snake venom phospholipase A2 (PLA2) that shows myotoxicity and induces paw edema in mice. Exhibits indirect hemolytic activity. Inhibits platelet aggregation induced by ADP and collagen. PLA2 catalyzes the calcium-dependent hydrolysis of the 2-acyl groups in 3-sn-phosphoglycerides. This is Acidic phospholipase A2 from Bothrops pauloensis (Neuwied's lancehead).